A 410-amino-acid polypeptide reads, in one-letter code: CinA-like protein (410 aa).

This sequence belongs to the CinA family.

This chain is CinA-like protein, found in Anaeromyxobacter sp. (strain Fw109-5).